The sequence spans 296 residues: Probable porphobilinogen deaminase (296 aa).

An S-(dipyrrolylmethanemethyl)cysteine modification is found at Cys-241.

Belongs to the HMBS family. Dipyrromethane is required as a cofactor.

It catalyses the reaction 4 porphobilinogen + H2O = hydroxymethylbilane + 4 NH4(+). It participates in porphyrin-containing compound metabolism; protoporphyrin-IX biosynthesis; coproporphyrinogen-III from 5-aminolevulinate: step 2/4. Functionally, tetrapolymerization of the monopyrrole PBG into the hydroxymethylbilane pre-uroporphyrinogen in several discrete steps. The chain is Probable porphobilinogen deaminase from Pyrobaculum neutrophilum (strain DSM 2338 / JCM 9278 / NBRC 100436 / V24Sta) (Thermoproteus neutrophilus).